The following is a 329-amino-acid chain: Protein-arginine N-acetylglucosaminyltransferase NleB (329 aa).

R13 is a glycosylation site (N-beta-linked (GlcNAc) arginine; by autocatalysis). Residue 48–50 (QWF) coordinates UDP-N-acetyl-alpha-D-glucosamine. An N-beta-linked (GlcNAc) arginine; by autocatalysis glycan is attached at R53. Y72 serves as a coordination point for UDP-N-acetyl-alpha-D-glucosamine. R159 carries N-beta-linked (GlcNAc) arginine; by autocatalysis glycosylation. 219–222 (YLDA) contacts UDP-N-acetyl-alpha-D-glucosamine. The short motif at 221–223 (DAD) is the DXD motif element. D223 serves as a coordination point for Mn(2+). E253 functions as the Proton acceptor in the catalytic mechanism. R293 is a glycosylation site (N-beta-linked (GlcNAc) arginine; by autocatalysis). Mn(2+) is bound by residues N320 and S322. UDP-N-acetyl-alpha-D-glucosamine contacts are provided by residues S322 and 327–329 (SSW).

This sequence belongs to the glycosyltransferase NleB family. Mn(2+) is required as a cofactor. In terms of processing, auto-glycosylated: arginine GlcNAcylation is required for activity toward death domain-containing host target proteins.

The protein localises to the secreted. It is found in the host cell. It carries out the reaction L-arginyl-[protein] + UDP-N-acetyl-alpha-D-glucosamine = N(omega)-(N-acetyl-beta-D-glucosaminyl)-L-arginyl-[protein] + UDP + H(+). Its function is as follows. Protein-arginine N-acetylglucosaminyltransferase effector that disrupts TNF signaling in infected cells, including NF-kappa-B signaling, apoptosis and necroptosis. Acts by catalyzing the transfer of a single N-acetylglucosamine (GlcNAc) to a conserved arginine residue in the death domain of host proteins FADD, TNFRSF1A and RIPK1: arginine GlcNAcylation prevents homotypic/heterotypic death domain interactions and assembly of the oligomeric TNF-alpha receptor complex, thereby disrupting TNF signaling. Has preference for host FADD as substrate compared to TNFRSF1A and RIPK1. Also acts on host proteins without a death domain: catalyzes GlcNAcylation of host GAPDH protein, thereby preventing GAPDH interaction with TRAF2 and TRAF3, leading to inhibit NF-kappa-B signaling and type I interferon production, respectively. Also displays intra-bacterial activity by mediating GlcNAcylation of glutathione synthetase GshB. Catalyzes auto-GlcNAcylation, which is required for activity toward death domain-containing host target proteins. The sequence is that of Protein-arginine N-acetylglucosaminyltransferase NleB from Citrobacter rodentium.